Here is an 876-residue protein sequence, read N- to C-terminus: Nitrogen regulatory protein areA (876 aa).

Over residues 1–11 the composition is skewed to gly residues; that stretch reads MSGLTLGGGSG. Disordered regions lie at residues 1 to 65, 137 to 159, 192 to 248, 393 to 413, 451 to 498, and 573 to 672; these read MSGL…PTDS, QERERAQQQARASSQKSPVPGMS, IPFS…ESEF, FSPPPSGYQSTASTPQPAYDG, YMYN…PNEF, and SADM…GPTT. 3 stretches are compositionally biased toward polar residues: residues 198–211, 399–408, and 455–480; these read DHPSPSTTKASEAT, GYQSTASTPQ, and QGGSSQDITQQNAHMGAQSSSMQSPG. The segment covering 602-611 has biased composition (basic and acidic residues); that stretch reads VRNRDQDPRR. Polar residues predominate over residues 615 to 640; that stretch reads ARTSSTPNTAQLLRQSMQNQSSHTSP. The segment at 673–697 adopts a GATA-type zinc-finger fold; that stretch reads CTNCFTQTTPLWRRNPEGQPLCNAC. A DNA-binding region (H-T-H motif) is located at residues 721 to 742; the sequence is NRNSANSLAVGSSRVSKKSARK. Polar residues-rich tracts occupy residues 724-734 and 742-766; these read SANSLAVGSSR and KNSVQQVTPTAPTSSRAQSNTTSES. Residues 724–856 form a disordered region; it reads SANSLAVGSS…MPPAAVNPAN (133 aa). 2 stretches are compositionally biased toward low complexity: residues 782-798 and 828-855; these read PIAAAPPKSSSAATTSP and SPSSTSSGGRSKVVPLAPAMPPAAVNPA.

As to quaternary structure, interacts with nmrA.

It is found in the nucleus. Functionally, transcription activator that binds the consensus DNA element 5'-CGATAG-3' and mediates nitrogen metabolite repression. Activates the transcription of uapA. This chain is Nitrogen regulatory protein areA (areA), found in Emericella nidulans (strain FGSC A4 / ATCC 38163 / CBS 112.46 / NRRL 194 / M139) (Aspergillus nidulans).